The primary structure comprises 359 residues: Spermine synthase (359 aa).

The 252-residue stretch at 53-304 (SGWFSEPHPR…GVIGFVLCST (252 aa)) folds into the PABS domain. Q99 lines the S-adenosyl 3-(methylsulfanyl)propylamine pocket. Spermidine is bound at residue Y129. Q130 provides a ligand contact to S-adenosyl 3-(methylsulfanyl)propylamine. Position 154 (D154) interacts with spermidine. S-adenosyl 3-(methylsulfanyl)propylamine contacts are provided by residues E174 and 205 to 206 (DA). The active-site Proton acceptor is the D224. Y292 serves as a coordination point for putrescine.

The protein belongs to the spermidine/spermine synthase family. Heterodimer. Component of a multiprotein complex. Interacts with SPDSYN1 and SPDSYN2. Expressed predominantly in stem internodes, flower buds and roots.

The enzyme catalyses S-adenosyl 3-(methylsulfanyl)propylamine + spermidine = spermine + S-methyl-5'-thioadenosine + H(+). It functions in the pathway amine and polyamine biosynthesis; spermine biosynthesis; spermine from spermidine: step 1/1. The chain is Spermine synthase (SPMS) from Arabidopsis thaliana (Mouse-ear cress).